The primary structure comprises 760 residues: Polyribonucleotide nucleotidyltransferase (760 aa).

Residues aspartate 492 and aspartate 498 each contribute to the Mg(2+) site. The region spanning proline 559–valine 618 is the KH domain. The 75-residue stretch at glycine 628–glutamine 702 folds into the S1 motif domain. The interval tryptophan 706–asparagine 760 is disordered. Residues glutamate 719–asparagine 760 are compositionally biased toward basic and acidic residues.

Belongs to the polyribonucleotide nucleotidyltransferase family. Requires Mg(2+) as cofactor.

Its subcellular location is the cytoplasm. It carries out the reaction RNA(n+1) + phosphate = RNA(n) + a ribonucleoside 5'-diphosphate. Its function is as follows. Involved in mRNA degradation. Catalyzes the phosphorolysis of single-stranded polyribonucleotides processively in the 3'- to 5'-direction. This is Polyribonucleotide nucleotidyltransferase from Nitratidesulfovibrio vulgaris (strain ATCC 29579 / DSM 644 / CCUG 34227 / NCIMB 8303 / VKM B-1760 / Hildenborough) (Desulfovibrio vulgaris).